Reading from the N-terminus, the 53-residue chain is UPF0391 membrane protein BURPS1106A_A2993 (53 aa).

2 consecutive transmembrane segments (helical) span residues 5-25 (ALIF…GIAA) and 30-50 (IAKI…VLGV).

Belongs to the UPF0391 family.

Its subcellular location is the cell membrane. The chain is UPF0391 membrane protein BURPS1106A_A2993 from Burkholderia pseudomallei (strain 1106a).